We begin with the raw amino-acid sequence, 374 residues long: Phosphate-binding protein PstS 1 (374 aa).

Residues 1-23 form the signal peptide; sequence MKIRLHTLLAVLTAAPLLLAAAG. Residue Cys-24 is the site of N-palmitoyl cysteine attachment. The S-diacylglycerol cysteine moiety is linked to residue Cys-24. The interval 25 to 48 is disordered; it reads GSKPPSGSPETGAGAGTVATTPAS. Residues 58–60, Ser-88, Asp-106, and 189–191 contribute to the phosphate site; these read STL and SGD.

This sequence belongs to the PstS family. In terms of assembly, the complex is composed of two ATP-binding proteins (PstB), two transmembrane proteins (PstC and PstA) and a solute-binding protein (PstS).

It localises to the cell membrane. Part of the ABC transporter complex PstSACB involved in phosphate import. The chain is Phosphate-binding protein PstS 1 (pstS1) from Mycobacterium tuberculosis (strain CDC 1551 / Oshkosh).